Consider the following 111-residue polypeptide: MTQLENKHCVPCEGTAAPMASEELQRQLSSLPEWTLVDDSGTSKLVRVFTFKDFQSALDFTNRVGQLAEAEGHHPALLTEWGKVTVSWWTHAIGGIHLNDVIMATKTEKLV.

The protein belongs to the pterin-4-alpha-carbinolamine dehydratase family.

It catalyses the reaction (4aS,6R)-4a-hydroxy-L-erythro-5,6,7,8-tetrahydrobiopterin = (6R)-L-erythro-6,7-dihydrobiopterin + H2O. The polypeptide is Putative pterin-4-alpha-carbinolamine dehydratase (Chlorobaculum tepidum (strain ATCC 49652 / DSM 12025 / NBRC 103806 / TLS) (Chlorobium tepidum)).